The primary structure comprises 546 residues: Low-affinity methionine permease (546 aa).

Over 1–70 the chain is Extracellular; it reads MEPLLFNSGK…QGRHLGVFST (70 aa). A helical membrane pass occupies residues 71-91; it reads VVLFVSRIMGSGIFAVPSVIL. The Cytoplasmic segment spans residues 92-98; sequence LNTGGNK. Residues 99 to 119 form a helical membrane-spanning segment; that stretch reads LIYFAIWVFSAAIAFAGLYLF. The Extracellular portion of the chain corresponds to 120–148; sequence LEFGSWIPKSGGRKNFLERSFERPRLLIS. The helical transmembrane segment at 149 to 169 threads the bilayer; sequence VVFSCYSVLTGYALTGSIVFG. Residues 170 to 188 lie on the Cytoplasmic side of the membrane; sequence KYVLSAFGVTDDSWSKYVS. Residues 189 to 209 traverse the membrane as a helical segment; the sequence is ISFIIFAVLIHGVSVRHGVFI. At 210–213 the chain is on the extracellular side; sequence QNAL. A helical membrane pass occupies residues 214 to 234; it reads GGLKLIMIVLMCFAGLYTLFF. Residues 235 to 254 are Cytoplasmic-facing; sequence YKSTGQVAWDLPVTQVEKDS. A helical membrane pass occupies residues 255 to 275; the sequence is LLSVSSIATAFISSFFCFSGW. At 276–297 the chain is on the extracellular side; that stretch reads DTVHTVTSEIKNPVKTLKVSGP. A helical transmembrane segment spans residues 298-318; sequence LSLIICFVCYTMMNVAYLKVL. A topological domain (cytoplasmic) is located at residue threonine 319. Residues 320–340 traverse the membrane as a helical segment; sequence YEEIVSAGPLVGSVLFTKLFG. Topologically, residues 341 to 346 are extracellular; that stretch reads PRVGGK. Residues 347–367 form a helical membrane-spanning segment; that stretch reads FIAFSIAISAASNILVVIYSI. Topologically, residues 368–393 are cytoplasmic; it reads SRVNQEIFKEGYLPFSIHMSKNWPFD. The helical transmembrane segment at 394 to 414 threads the bilayer; the sequence is APLPSISLCGFITIAWILILP. At 415–423 the chain is on the extracellular side; it reads KEGESFNYL. Residues 424–444 traverse the membrane as a helical segment; that stretch reads VSMDGYGNQFFLLLVAIGLFI. The Cytoplasmic portion of the chain corresponds to 445 to 459; it reads WRFKHKNEVPEIRAS. A helical membrane pass occupies residues 460–480; that stretch reads TFGVLAIITLSLYMLMAPFFA. At 481–494 the chain is on the extracellular side; sequence DPSLNRVGFLPPYQ. The helical transmembrane segment at 495–515 threads the bilayer; it reads IMSLLVIVACFFFWLVKFVLL. Residues 516–546 are Cytoplasmic-facing; it reads PKFFHYKLLPKITYLHDGLIVTEWVKKPCLC.

It to yeast high affinity methionine permease (MUP1).

Its subcellular location is the membrane. Its function is as follows. Very low affinity permease for methionine. This Saccharomyces cerevisiae (strain ATCC 204508 / S288c) (Baker's yeast) protein is Low-affinity methionine permease (MUP3).